A 247-amino-acid chain; its full sequence is ATP synthase subunit a (247 aa).

The next 6 helical transmembrane spans lie at Ile26–Val46, Tyr85–Leu105, Ile115–Phe135, Phe141–Ile161, Phe178–Val198, and Ile205–Ile225.

This sequence belongs to the ATPase A chain family. In terms of assembly, F-type ATPases have 2 components, CF(1) - the catalytic core - and CF(0) - the membrane proton channel. CF(1) has five subunits: alpha(3), beta(3), gamma(1), delta(1), epsilon(1). CF(0) has three main subunits: a, b and c.

Its subcellular location is the mitochondrion inner membrane. Its function is as follows. Mitochondrial membrane ATP synthase (F(1)F(0) ATP synthase or Complex V) produces ATP from ADP in the presence of a proton gradient across the membrane which is generated by electron transport complexes of the respiratory chain. F-type ATPases consist of two structural domains, F(1) - containing the extramembraneous catalytic core and F(0) - containing the membrane proton channel, linked together by a central stalk and a peripheral stalk. During catalysis, ATP synthesis in the catalytic domain of F(1) is coupled via a rotary mechanism of the central stalk subunits to proton translocation. Key component of the proton channel; it may play a direct role in the translocation of protons across the membrane. The protein is ATP synthase subunit a (ATP6) of Acanthamoeba castellanii (Amoeba).